A 910-amino-acid polypeptide reads, in one-letter code: Protein translocase subunit SecA (910 aa).

ATP-binding positions include glutamine 86, 104–108 (GEGKT), and aspartate 499. Zn(2+) contacts are provided by cysteine 894, cysteine 896, cysteine 905, and histidine 906.

Belongs to the SecA family. Monomer and homodimer. Part of the essential Sec protein translocation apparatus which comprises SecA, SecYEG and auxiliary proteins SecDF-YajC and YidC. The cofactor is Zn(2+).

The protein localises to the cell inner membrane. It localises to the cytoplasm. The enzyme catalyses ATP + H2O + cellular proteinSide 1 = ADP + phosphate + cellular proteinSide 2.. Part of the Sec protein translocase complex. Interacts with the SecYEG preprotein conducting channel. Has a central role in coupling the hydrolysis of ATP to the transfer of proteins into and across the cell membrane, serving both as a receptor for the preprotein-SecB complex and as an ATP-driven molecular motor driving the stepwise translocation of polypeptide chains across the membrane. This Rickettsia bellii (strain RML369-C) protein is Protein translocase subunit SecA.